The sequence spans 270 residues: Regulatory protein RecX (270 aa).

The protein belongs to the RecX family.

It localises to the cytoplasm. Its function is as follows. Modulates RecA activity. This Bacillus thuringiensis subsp. konkukian (strain 97-27) protein is Regulatory protein RecX.